We begin with the raw amino-acid sequence, 1916 residues long: Endoribonuclease Dicer (1916 aa).

Residues 51–227 (LLEAALDHNT…ELEEKIQKLE (177 aa)) enclose the Helicase ATP-binding domain. 64-71 (LNTGSGKT) contacts ATP. A DECH box motif is present at residues 175-178 (DECH). The segment at 256-595 (DCGPFTDRSG…LRNKCSKSAD (340 aa)) is required for interaction with PRKRA and TARBP2. The segment at 409 to 433 (YVSWSDSEDDDDDEEIEEKEKPETN) is disordered. Phosphoserine occurs at positions 413 and 415. The span at 414 to 425 (DSEDDDDDEEIE) shows a compositional bias: acidic residues. A Helicase C-terminal domain is found at 433-602 (NFPSPFTNIL…SADGAEADVH (170 aa)). A Dicer dsRNA-binding fold domain is found at 630–722 (AIGHINRYCA…MPVGKETVKY (93 aa)). A disordered region spans residues 726 to 745 (LDLHDEEETSVPGRPGSTKR). One can recognise a PAZ domain in the interval 895–1042 (KFMEDIEKSE…LVPELCAIHP (148 aa)). 2 positions are modified to phosphoserine: Ser-1016 and Ser-1160. In terms of domain architecture, RNase III 1 spans 1276 to 1403 (DSEQSPSVGY…SEKWEKDEMT (128 aa)). Mg(2+) is bound by residues Glu-1316, Glu-1395, and Glu-1398. 3 positions are modified to phosphoserine: Ser-1456, Ser-1464, and Ser-1466. The interval 1598 to 1626 (ALDPAQENGSSQQKSLSGSCAAPVGPRSS) is disordered. A compositionally biased stretch (polar residues) spans 1604–1615 (ENGSSQQKSLSG). Residues 1660-1818 (FETFEKKINY…LAGAIYMDSG (159 aa)) enclose the RNase III 2 domain. Positions 1699, 1804, and 1807 each coordinate Mg(2+). The DRBM domain maps to 1843 to 1908 (VPRSPVRELL…ARRALRSLKA (66 aa)). Phosphoserine is present on Ser-1862.

It belongs to the helicase family. Dicer subfamily. Component of the RISC loading complex (RLC), or micro-RNA (miRNA) loading complex (miRLC), which is composed of DICER1, AGO2 and TARBP2; DICER1 and TARBP2 are required to process precursor miRNAs (pre-miRNAs) to mature miRNAs and then load them onto AGO2. Note that the trimeric RLC/miRLC is also referred to as RISC. Interacts with DHX9, AGO1, PIWIL1 and PRKRA. Interacts with AGO2, TARBP2, EIF6, MOV10 and RPL7A (60S ribosome subunit); they form a large RNA-induced silencing complex (RISC). Interacts with BCDIN3D. Interacts (via Dicer dsRNA-binding fold domain) with ALOX5 (via PLAT domain); this interaction enhances arachidonate 5-lipoxygenase activity and modifies the miRNA precursor processing activity of DICER1. Mg(2+) serves as cofactor. The cofactor is Mn(2+). As to expression, isoform 1 is expressed in a wide variety of tissues. Isoform 2 is specifically expressed in oocytes during their growth (at protein level).

The protein resides in the cytoplasm. It carries out the reaction Endonucleolytic cleavage to 5'-phosphomonoester.. In terms of biological role, double-stranded RNA (dsRNA) endoribonuclease playing a central role in short dsRNA-mediated post-transcriptional gene silencing. Cleaves naturally occurring long dsRNAs and short hairpin pre-microRNAs (miRNA) into fragments of twenty-one to twenty-three nucleotides with 3' overhang of two nucleotides, producing respectively short interfering RNAs (siRNA) and mature microRNAs. SiRNAs and miRNAs serve as guide to direct the RNA-induced silencing complex (RISC) to complementary RNAs to degrade them or prevent their translation. Gene silencing mediated by siRNAs, also called RNA interference, controls the elimination of transcripts from mobile and repetitive DNA elements of the genome but also the degradation of exogenous RNA of viral origin for instance. The miRNA pathway on the other side is a mean to specifically regulate the expression of target genes. Functionally, more active than isoform 1 to process long double-stranded RNA into siRNAs. Responsible for the accumulation of endogenous siRNAs observed in mouse oocytes compared to somatic cells and it regulates meiotic spindle organization in female germline. This is Endoribonuclease Dicer (Dicer1) from Mus musculus (Mouse).